Here is a 73-residue protein sequence, read N- to C-terminus: Translation initiation factor IF-1 1 (73 aa).

One can recognise an S1-like domain in the interval 1 to 72 (MAKEELIEFG…TKGRINFRHK (72 aa)).

This sequence belongs to the IF-1 family. As to quaternary structure, component of the 30S ribosomal translation pre-initiation complex which assembles on the 30S ribosome in the order IF-2 and IF-3, IF-1 and N-formylmethionyl-tRNA(fMet); mRNA recruitment can occur at any time during PIC assembly.

It is found in the cytoplasm. Functionally, one of the essential components for the initiation of protein synthesis. Stabilizes the binding of IF-2 and IF-3 on the 30S subunit to which N-formylmethionyl-tRNA(fMet) subsequently binds. Helps modulate mRNA selection, yielding the 30S pre-initiation complex (PIC). Upon addition of the 50S ribosomal subunit IF-1, IF-2 and IF-3 are released leaving the mature 70S translation initiation complex. The chain is Translation initiation factor IF-1 1 from Cupriavidus pinatubonensis (strain JMP 134 / LMG 1197) (Cupriavidus necator (strain JMP 134)).